The primary structure comprises 301 residues: tRNA pseudouridine synthase B (301 aa).

Asp-47 serves as the catalytic Nucleophile.

This sequence belongs to the pseudouridine synthase TruB family. Type 1 subfamily.

It catalyses the reaction uridine(55) in tRNA = pseudouridine(55) in tRNA. Its function is as follows. Responsible for synthesis of pseudouridine from uracil-55 in the psi GC loop of transfer RNAs. In Cereibacter sphaeroides (strain ATCC 17025 / ATH 2.4.3) (Rhodobacter sphaeroides), this protein is tRNA pseudouridine synthase B.